The sequence spans 549 residues: Indole-3-acetic acid-amido synthetase GH3.2 (549 aa).

The protein belongs to the IAA-amido conjugating enzyme family. As to expression, expressed in flowers, pollen, cotyledons, stipules, true leaves, hypocotyls, and all parts of the roots except for the primary root tips.

Functionally, catalyzes the synthesis of indole-3-acetic acid (IAA)-amino acid conjugates, providing a mechanism for the plant to cope with the presence of excess auxin. Strongly reactive with Glu, Gln, Trp, Asp, Ala, Leu, Phe, Gly, Tyr, Met, Ile and Val. Little or no product formation with His, Ser, Thr, Arg, Lys, or Cys. Also active on pyruvic and butyric acid analogs of IAA, PAA and the synthetic auxin naphthaleneacetic acid (NAA). The two chlorinated synthetic auxin herbicides 2,4-D and 3,6-dichloro-o-anisic acid (dicamba) cannot be used as substrates. The polypeptide is Indole-3-acetic acid-amido synthetase GH3.2 (GH3.2) (Arabidopsis thaliana (Mouse-ear cress)).